We begin with the raw amino-acid sequence, 306 residues long: Acetyl-coenzyme A carboxylase carboxyl transferase subunit beta (306 aa).

Residues 27 to 296 (LWHKCPSCEA…PEFVAAPVEP (270 aa)) enclose the CoA carboxyltransferase N-terminal domain. Zn(2+)-binding residues include Cys31, Cys34, Cys50, and Cys53. The segment at 31 to 53 (CPSCEAVLYRPELEKTLDVCPKC) adopts a C4-type zinc-finger fold.

It belongs to the AccD/PCCB family. As to quaternary structure, acetyl-CoA carboxylase is a heterohexamer composed of biotin carboxyl carrier protein (AccB), biotin carboxylase (AccC) and two subunits each of ACCase subunit alpha (AccA) and ACCase subunit beta (AccD). It depends on Zn(2+) as a cofactor.

The protein localises to the cytoplasm. It catalyses the reaction N(6)-carboxybiotinyl-L-lysyl-[protein] + acetyl-CoA = N(6)-biotinyl-L-lysyl-[protein] + malonyl-CoA. It functions in the pathway lipid metabolism; malonyl-CoA biosynthesis; malonyl-CoA from acetyl-CoA: step 1/1. In terms of biological role, component of the acetyl coenzyme A carboxylase (ACC) complex. Biotin carboxylase (BC) catalyzes the carboxylation of biotin on its carrier protein (BCCP) and then the CO(2) group is transferred by the transcarboxylase to acetyl-CoA to form malonyl-CoA. The polypeptide is Acetyl-coenzyme A carboxylase carboxyl transferase subunit beta (Pseudomonas fluorescens (strain ATCC BAA-477 / NRRL B-23932 / Pf-5)).